Consider the following 62-residue polypeptide: Photosystem II reaction center protein Z (62 aa).

2 consecutive transmembrane segments (helical) span residues 8-28 (LVVA…ITLS) and 41-61 (VTAS…NSFV).

It belongs to the PsbZ family. PSII is composed of 1 copy each of membrane proteins PsbA, PsbB, PsbC, PsbD, PsbE, PsbF, PsbH, PsbI, PsbJ, PsbK, PsbL, PsbM, PsbT, PsbX, PsbY, PsbZ, Psb30/Ycf12, at least 3 peripheral proteins of the oxygen-evolving complex and a large number of cofactors. It forms dimeric complexes.

The protein resides in the plastid. The protein localises to the chloroplast thylakoid membrane. Functionally, may control the interaction of photosystem II (PSII) cores with the light-harvesting antenna, regulates electron flow through the 2 photosystem reaction centers. PSII is a light-driven water plastoquinone oxidoreductase, using light energy to abstract electrons from H(2)O, generating a proton gradient subsequently used for ATP formation. This chain is Photosystem II reaction center protein Z, found in Cyanidioschyzon merolae (strain NIES-3377 / 10D) (Unicellular red alga).